Here is a 451-residue protein sequence, read N- to C-terminus: Gamma-aminobutyric acid receptor subunit alpha-2 (451 aa).

An N-terminal signal peptide occupies residues 1-28 (MKTKLNIYNMQLLLFVFLVWDPARLVLA). Topologically, residues 29–249 (NIQEDEAKNN…MTAHFHLKRK (221 aa)) are extracellular. Asparagine 38 carries an N-linked (GlcNAc...) asparagine glycan. A 4-aminobutanoate-binding site is contributed by arginine 94. The N-linked (GlcNAc...) asparagine glycan is linked to asparagine 138. Threonine 157 serves as a coordination point for 4-aminobutanoate. The cysteines at positions 166 and 180 are disulfide-linked. The chain crosses the membrane as a helical span at residues 250-270 (IGYFVIQTYLPCIMTVILSQV). Topologically, residues 271–280 (SFWLNRESVP) are cytoplasmic. The chain crosses the membrane as a helical span at residues 281–300 (ARTVFGVTTVLTMTTLSISA). Residues 301-311 (RNSLPKVAYAT) lie on the Extracellular side of the membrane. Residues 312–332 (AMDWFIAVCYAFVFSALIEFA) form a helical membrane-spanning segment. The Cytoplasmic segment spans residues 333 to 420 (TVNYFTKRGW…FNSVSKIDRM (88 aa)). The helical transmembrane segment at 421 to 441 (SRIVFPVLFGTFNLVYWATYL) threads the bilayer. The Extracellular portion of the chain corresponds to 442–451 (NREPVLGVSP).

The protein belongs to the ligand-gated ion channel (TC 1.A.9) family. Gamma-aminobutyric acid receptor (TC 1.A.9.5) subfamily. GABRA2 sub-subfamily. Heteropentamer, formed by a combination of alpha (GABRA1-6), beta (GABRB1-3), gamma (GABRG1-3), delta (GABRD), epsilon (GABRE), rho (GABRR1-3), pi (GABRP) and theta (GABRQ) subunits, each subunit exhibiting distinct physiological and pharmacological properties. Interacts with UBQLN1. Interacts with KIF21B. Interacts with LHFPL4. Interacts with SHISA7; interaction leads to the regulation of GABA(A) receptor trafficking, channel deactivation kinetics and pharmacology. Post-translationally, glycosylated.

It localises to the postsynaptic cell membrane. The protein resides in the cell membrane. Its subcellular location is the cytoplasmic vesicle membrane. The protein localises to the cell projection. It is found in the dendrite. It carries out the reaction chloride(in) = chloride(out). With respect to regulation, activated by pentobarbital. Inhibited by the antagonist bicuculline. Functionally, alpha subunit of the heteropentameric ligand-gated chloride channel gated by gamma-aminobutyric acid (GABA), a major inhibitory neurotransmitter in the brain. GABA-gated chloride channels, also named GABA(A) receptors (GABAAR), consist of five subunits arranged around a central pore and contain GABA active binding site(s) located at the alpha and beta subunit interface(s). When activated by GABA, GABAARs selectively allow the flow of chloride anions across the cell membrane down their electrochemical gradient. Chloride influx into the postsynaptic neuron following GABAAR opening decreases the neuron ability to generate a new action potential, thereby reducing nerve transmission. The alpha-2 subunit exhibits synaptogenic activity together with beta-2 and very little to no activity together with beta-3, the gamma-2 subunit being necessary but not sufficient to induce rapid synaptic contacts formation. This is Gamma-aminobutyric acid receptor subunit alpha-2 (GABRA2) from Pongo abelii (Sumatran orangutan).